Consider the following 151-residue polypeptide: uncharacterized protein (151 aa).

4Fe-4S ferredoxin-type domains follow at residues 4-32 (KIIV…ESRV), 33-63 (RKVD…YLKD), and 64-93 (GIPI…IKNR). Cys-13, Cys-16, Cys-19, Cys-23, Cys-42, Cys-45, Cys-50, Cys-54, Cys-73, Cys-76, Cys-79, Cys-83, Cys-98, Cys-101, Cys-111, and Cys-115 together coordinate [4Fe-4S] cluster.

[4Fe-4S] cluster is required as a cofactor.

This is an uncharacterized protein from Methanocaldococcus jannaschii (strain ATCC 43067 / DSM 2661 / JAL-1 / JCM 10045 / NBRC 100440) (Methanococcus jannaschii).